A 539-amino-acid chain; its full sequence is Neutral amino acid transporter B(0) (539 aa).

An N-acetylmethionine modification is found at M1. At 1–52 (MVADPPKGDPKGYAAAEPTANGVSMLVPIEDVGSLKGGRCGSGDQVRRCLRA) the chain is on the cytoplasmic side. The helical transmembrane segment at 53–82 (NLLVLLTVVAVVAGVALGLGVSGAGGAFAL) threads the bilayer. The Extracellular segment spans residues 83–95 (GPARLEAFSFPGE). Residues 96-117 (LLLRLLKMIILPLVVCSLIGGA) traverse the membrane as a helical segment. The Cytoplasmic segment spans residues 118 to 131 (ASLDPSALGRLGAW). The chain crosses the membrane as a helical span at residues 132-154 (ALLFFLVTTLLASALGVGLALAL). Residues 155–223 (QPGAAFAAIN…GTLVKVPTGG (69 aa)) lie on the Extracellular side of the membrane. N164 and N213 each carry an N-linked (GlcNAc...) asparagine glycan. A helical membrane pass occupies residues 224-247 (EVEGMNILGLVVFAIIFGVALRKL). Topologically, residues 248-256 (GPEGELLIR) are cytoplasmic. Residues 257–284 (FFNSFNDATMVLVSWIMWYAPVGILFLV) form a helical membrane-spanning segment. Residues 285-305 (AGKIVEMENVGLLFASLGKYI) are Extracellular-facing. Residues 306 to 327 (LCCLLGHAIHGLLTLPLIYFLF) traverse the membrane as a helical segment. Residues 328 to 332 (ARKNP) lie on the Cytoplasmic side of the membrane. The discontinuously helical intramembrane region spans 333-363 (YRFLWGIMTPLATAFGTSSSSATLPLMMKCV). Over 364–372 (EEKNGVARH) the chain is Cytoplasmic. A helical membrane pass occupies residues 373-399 (ISRFILPIGATVNMDGAALFQCVAAVF). Positions 381, 383, and 385 each coordinate Na(+). The Extracellular segment spans residues 400-412 (IAQLNHRSLDFVK). The segment at residues 413–446 (IITILVTATASSVGAAGIPSGGVLTLAIILEAVN) is an intramembrane region (discontinuously helical). Topologically, residues 447-459 (LPVHDISLILAVD) are extracellular. Residues 460-481 (WLVDRSCTVLNVEGDAFGAGLL) form a helical membrane-spanning segment. Residues N470 and D474 each coordinate Na(+). The Cytoplasmic segment spans residues 482–539 (QSYLDRTENCNSVPELIQVKSEMPLAALPVPGEEGNPLLKGCPGPAGDADTCEKESVM). S493, S502, and S537 each carry phosphoserine. The segment at 518–539 (PLLKGCPGPAGDADTCEKESVM) is disordered.

It belongs to the dicarboxylate/amino acid:cation symporter (DAACS) (TC 2.A.23) family. SLC1A5 subfamily. Homotrimer.

Its subcellular location is the cell membrane. It is found in the melanosome. The enzyme catalyses L-glutamine(out) + L-serine(in) + Na(+)(out) = L-glutamine(in) + L-serine(out) + Na(+)(in). It catalyses the reaction L-glutamine(in) + L-serine(out) + Na(+)(out) = L-glutamine(out) + L-serine(in) + Na(+)(in). The catalysed reaction is L-threonine(in) + L-glutamine(out) + Na(+)(out) = L-threonine(out) + L-glutamine(in) + Na(+)(in). It carries out the reaction L-threonine(out) + L-glutamine(in) + Na(+)(out) = L-threonine(in) + L-glutamine(out) + Na(+)(in). The enzyme catalyses L-asparagine(in) + L-glutamine(out) + Na(+)(out) = L-asparagine(out) + L-glutamine(in) + Na(+)(in). It catalyses the reaction L-asparagine(out) + L-glutamine(in) + Na(+)(out) = L-asparagine(in) + L-glutamine(out) + Na(+)(in). The catalysed reaction is L-glutamine(in) + L-alanine(out) + Na(+)(out) = L-glutamine(out) + L-alanine(in) + Na(+)(in). It carries out the reaction L-valine(out) + L-glutamine(in) + Na(+)(out) = L-valine(in) + L-glutamine(out) + Na(+)(in). The enzyme catalyses L-glutamine(in) + L-methionine(out) + Na(+)(out) = L-glutamine(out) + L-methionine(in) + Na(+)(in). It catalyses the reaction L-glutamine(in) + L-glutamate(out) + Na(+)(out) + H(+)(out) = L-glutamine(out) + L-glutamate(in) + Na(+)(in) + H(+)(in). The catalysed reaction is D-serine(in) + L-glutamine(out) + Na(+)(out) = D-serine(out) + L-glutamine(in) + Na(+)(in). It carries out the reaction D-serine(in) + L-alanine(out) + Na(+)(out) = D-serine(out) + L-alanine(in) + Na(+)(in). The enzyme catalyses nitrate(in) = nitrate(out). It catalyses the reaction iodide(out) = iodide(in). The catalysed reaction is thiocyanate(in) = thiocyanate(out). Functionally, sodium-coupled antiporter of neutral amino acids. In a tri-substrate transport cycle, exchanges neutral amino acids between the extracellular and intracellular compartments, coupled to the inward cotransport of at least one sodium ion. The preferred substrate is the essential amino acid L-glutamine, a precursor for biosynthesis of proteins, nucleotides and amine sugars as well as an alternative fuel for mitochondrial oxidative phosphorylation. Exchanges L-glutamine with other neutral amino acids such as L-serine, L-threonine and L-asparagine in a bidirectional way. Provides L-glutamine to proliferating stem and activated cells driving the metabolic switch toward cell differentiation. The transport cycle is usually pH-independent, with the exception of L-glutamate. Transports extracellular L-glutamate coupled to the cotransport of one proton and one sodium ion in exchange for intracellular L-glutamine counter-ion. May provide for L-glutamate uptake in glial cells regulating glutamine/glutamate cycle in the nervous system. Can transport D-amino acids. Mediates D-serine release from the retinal glia potentially affecting NMDA receptor function in retinal neurons. Displays sodium- and amino acid-dependent but uncoupled channel-like anion conductance with a preference SCN(-) &gt;&gt; NO3(-) &gt; I(-) &gt; Cl(-). Through binding of the fusogenic protein syncytin-1/ERVW-1 may mediate trophoblasts syncytialization, the spontaneous fusion of their plasma membranes, an essential process in placental development. The sequence is that of Neutral amino acid transporter B(0) (SLC1A5) from Bos taurus (Bovine).